Here is a 239-residue protein sequence, read N- to C-terminus: Large ribosomal subunit protein bL25 (239 aa).

The interval 217 to 239 is disordered; it reads IKAEAHAAEGTQAEGSTEEGQQQ. Over residues 229–239 the composition is skewed to polar residues; that stretch reads AEGSTEEGQQQ.

This sequence belongs to the bacterial ribosomal protein bL25 family. CTC subfamily. In terms of assembly, part of the 50S ribosomal subunit; part of the 5S rRNA/L5/L18/L25 subcomplex. Contacts the 5S rRNA. Binds to the 5S rRNA independently of L5 and L18.

This is one of the proteins that binds to the 5S RNA in the ribosome where it forms part of the central protuberance. The chain is Large ribosomal subunit protein bL25 from Deinococcus deserti (strain DSM 17065 / CIP 109153 / LMG 22923 / VCD115).